The sequence spans 251 residues: Triosephosphate isomerase, glycosomal (251 aa).

Residues asparagine 12 and lysine 14 each contribute to the substrate site. The active-site Electrophile is the histidine 96. Glutamate 168 serves as the catalytic Proton acceptor.

The protein belongs to the triosephosphate isomerase family. As to quaternary structure, homodimer.

Its subcellular location is the glycosome. It catalyses the reaction D-glyceraldehyde 3-phosphate = dihydroxyacetone phosphate. Its pathway is carbohydrate biosynthesis; gluconeogenesis. The protein operates within carbohydrate degradation; glycolysis; D-glyceraldehyde 3-phosphate from glycerone phosphate: step 1/1. The sequence is that of Triosephosphate isomerase, glycosomal from Trypanosoma cruzi.